The sequence spans 414 residues: MISNLSKVLNSNVKRMYTTAKNLESVVIVSAVRTPIGSIGGSLSTIPGTKLSSITIEEAVKRAGIKPSDVDEAIIGNVISANLGQAPARQCALGAGLEQKTITTTINKVCSSGMKAIVFGAQSIALGHSKTVVAGGFESMSQVPYYADKMRFGAKYGNQTFIDGLVRDGLADAYNGSAMGVCGDDCADKYKITREQQDKFAVDSYLRALEAQKNGFFNDEIVQVPIVGRGGKVTYVVEDEEPKKVLFDKIPNLKPAFTPNGTVTPANASKLNDGASSVILMSESHAKELGLKPLARIIGYADAEQAPIEFPTAPALAIPKALKNAGINMSQVDLFEINEAFAVVGLANAKILDIDHNKLNVNGGAVALGHPIGSSGCRIVVTLTHLLQNKNLKYGVAAICNGGGGSTALVLEKL.

Residue Cys-110 is the Acyl-thioester intermediate of the active site. CoA is bound by residues Tyr-205, 244 to 246 (KVL), and Lys-249. A K(+)-binding site is contributed by Tyr-205. The K(+) site is built by Ala-266 and Ala-268. Ser-269 serves as a coordination point for CoA. K(+) is bound at residue Val-366. Active-site proton acceptor residues include His-370 and Cys-400.

It belongs to the thiolase-like superfamily. Thiolase family.

It carries out the reaction 2 acetyl-CoA = acetoacetyl-CoA + CoA. This is Probable acetyl-CoA acetyltransferase from Dictyostelium discoideum (Social amoeba).